We begin with the raw amino-acid sequence, 378 residues long: GDP-mannose 3,5-epimerase 1 (378 aa).

Residues 36–62 (GAGGFIGSHIARRLKSEGHYIIASDWK), aspartate 60, and aspartate 80 contribute to the NAD(+) site. Residues glycine 105 and 145-147 (SAC) each bind substrate. Tyrosine 175 and lysine 179 together coordinate NAD(+). Residue tyrosine 175 is the Proton acceptor of the active site. Residues asparagine 204, 217 to 219 (EKA), lysine 226, 242 to 244 (QTR), arginine 307, and serine 357 each bind substrate.

It belongs to the NAD(P)-dependent epimerase/dehydratase family. As to quaternary structure, homodimer. Requires NAD(+) as cofactor.

The catalysed reaction is GDP-alpha-D-mannose = GDP-beta-L-gulose. The enzyme catalyses GDP-beta-L-gulose = GDP-beta-L-galactose. The protein operates within cofactor biosynthesis; L-ascorbate biosynthesis via GDP-alpha-D-mannose pathway; L-ascorbate from GDP-alpha-D-mannose: step 1/5. Catalyzes a reversible epimerization of GDP-D-mannose that precedes the committed step in the biosynthesis of vitamin C (L-ascorbate), resulting in the hydrolysis of the highly energetic glycosyl-pyrophosphoryl linkage. Able to catalyze 2 distinct epimerization reactions and can release both GDP-L-galactose and GDP-L-gulose from GDP-mannose. This Oryza sativa subsp. indica (Rice) protein is GDP-mannose 3,5-epimerase 1.